The sequence spans 335 residues: Transaldolase (335 aa).

Position 2 is an N-acetylserine (Ser-2). Lys-144 acts as the Schiff-base intermediate with substrate in catalysis.

This sequence belongs to the transaldolase family. Type 1 subfamily. In terms of assembly, homodimer.

The enzyme catalyses D-sedoheptulose 7-phosphate + D-glyceraldehyde 3-phosphate = D-erythrose 4-phosphate + beta-D-fructose 6-phosphate. It functions in the pathway carbohydrate degradation; pentose phosphate pathway; D-glyceraldehyde 3-phosphate and beta-D-fructose 6-phosphate from D-ribose 5-phosphate and D-xylulose 5-phosphate (non-oxidative stage): step 2/3. Functionally, transaldolase is important for the balance of metabolites in the pentose-phosphate pathway. This is Transaldolase (TAL1) from Saccharomyces cerevisiae (strain ATCC 204508 / S288c) (Baker's yeast).